Consider the following 188-residue polypeptide: HTH-type transcriptional regulator Mb3439c (188 aa).

The 61-residue stretch at 17-77 (EEVAAAILQA…AVLDHLGTKL (61 aa)) folds into the HTH tetR-type domain. Positions 40-59 (SIRDIAARSKVNHGLVFRHF) form a DNA-binding region, H-T-H motif.

Negatively regulates the expression of sulfate ester dioxygenase Mb3440 and its own expression. In Mycobacterium bovis (strain ATCC BAA-935 / AF2122/97), this protein is HTH-type transcriptional regulator Mb3439c.